We begin with the raw amino-acid sequence, 87 residues long: Small ribosomal subunit protein bS16 (87 aa).

Belongs to the bacterial ribosomal protein bS16 family.

This is Small ribosomal subunit protein bS16 from Ehrlichia ruminantium (strain Welgevonden).